Reading from the N-terminus, the 242-residue chain is Ubiquinone biosynthesis O-methyltransferase (242 aa).

Residues Arg44, Gly64, Asp85, and Met129 each contribute to the S-adenosyl-L-methionine site.

It belongs to the methyltransferase superfamily. UbiG/COQ3 family.

It carries out the reaction a 3-demethylubiquinol + S-adenosyl-L-methionine = a ubiquinol + S-adenosyl-L-homocysteine + H(+). The catalysed reaction is a 3-(all-trans-polyprenyl)benzene-1,2-diol + S-adenosyl-L-methionine = a 2-methoxy-6-(all-trans-polyprenyl)phenol + S-adenosyl-L-homocysteine + H(+). It functions in the pathway cofactor biosynthesis; ubiquinone biosynthesis. In terms of biological role, O-methyltransferase that catalyzes the 2 O-methylation steps in the ubiquinone biosynthetic pathway. The sequence is that of Ubiquinone biosynthesis O-methyltransferase from Klebsiella pneumoniae (strain 342).